Here is a 541-residue protein sequence, read N- to C-terminus: EH domain-containing protein 4 (541 aa).

Methionine 1 is subject to N-acetylmethionine. Residues 1 to 20 are disordered; it reads MFSWMGRQAGGRERSGGMDA. Serine 15 bears the Phosphoserine mark. Residues 58–289 form the Dynamin-type G domain; the sequence is FENKPMILLV…DLFRDIQSLP (232 aa). The interval 68 to 75 is G1 motif; sequence GQYSTGKT. 68 to 75 is an ATP binding site; that stretch reads GQYSTGKT. The interval 94–95 is G2 motif; sequence EP. The tract at residues 156 to 159 is G3 motif; it reads DSPG. At serine 162 the chain carries Phosphoserine. The interval 222 to 225 is G4 motif; the sequence is NKAD. Lysine 223 contributes to the ATP binding site. Residue valine 246 is a region of interest, G5 motif. Residue tryptophan 261 participates in ATP binding. In terms of domain architecture, EH spans 447–535; the sequence is DKPVYDELFY…PHLVPPSHRK (89 aa). Position 451 is a phosphotyrosine (tyrosine 451). At serine 459 the chain carries Phosphoserine. An EF-hand domain is found at 479-514; the sequence is LPNSVLGKIWKLADCDCDGMLDEEEFALAKHLIKIK. The Ca(2+) site is built by aspartate 492, aspartate 494, aspartate 496, methionine 498, and glutamate 503.

Belongs to the TRAFAC class dynamin-like GTPase superfamily. Dynamin/Fzo/YdjA family. EHD subfamily. As to quaternary structure, homooligomer, and heterooligomer with EHD1, EHD2 and EHD3. Forms a complex with EHD4 and MICALL1; the complex controls CDH5 trafficking and coordinates angiogenesis.

It is found in the early endosome membrane. The protein localises to the recycling endosome membrane. It localises to the cell membrane. The protein resides in the cell junction. Its subcellular location is the adherens junction. In terms of biological role, ATP- and membrane-binding protein that probably controls membrane reorganization/tubulation upon ATP hydrolysis. Plays a role in early endosomal transport. During sprouting angiogenesis, in complex with PACSIN2 and MICALL1, forms recycling endosome-like tubular structure at asymmetric adherens junctions to control CDH5 trafficking. The chain is EH domain-containing protein 4 from Mus musculus (Mouse).